Reading from the N-terminus, the 434-residue chain is 3-phosphoshikimate 1-carboxyvinyltransferase (434 aa).

Residues K22, S23, and R27 each contribute to the 3-phosphoshikimate site. K22 is a phosphoenolpyruvate binding site. Positions 93 and 121 each coordinate phosphoenolpyruvate. Residues S168, S169, Q170, S199, D320, and K347 each coordinate 3-phosphoshikimate. Q170 serves as a coordination point for phosphoenolpyruvate. D320 functions as the Proton acceptor in the catalytic mechanism. Residues R351, R394, and K419 each coordinate phosphoenolpyruvate.

Belongs to the EPSP synthase family. Monomer.

The protein resides in the cytoplasm. It carries out the reaction 3-phosphoshikimate + phosphoenolpyruvate = 5-O-(1-carboxyvinyl)-3-phosphoshikimate + phosphate. It functions in the pathway metabolic intermediate biosynthesis; chorismate biosynthesis; chorismate from D-erythrose 4-phosphate and phosphoenolpyruvate: step 6/7. Its function is as follows. Catalyzes the transfer of the enolpyruvyl moiety of phosphoenolpyruvate (PEP) to the 5-hydroxyl of shikimate-3-phosphate (S3P) to produce enolpyruvyl shikimate-3-phosphate and inorganic phosphate. The sequence is that of 3-phosphoshikimate 1-carboxyvinyltransferase from Burkholderia orbicola (strain AU 1054).